The following is a 101-amino-acid chain: Urease subunit beta (101 aa).

The protein belongs to the urease beta subunit family. Heterotrimer of UreA (gamma), UreB (beta) and UreC (alpha) subunits. Three heterotrimers associate to form the active enzyme.

It is found in the cytoplasm. It catalyses the reaction urea + 2 H2O + H(+) = hydrogencarbonate + 2 NH4(+). It functions in the pathway nitrogen metabolism; urea degradation; CO(2) and NH(3) from urea (urease route): step 1/1. The protein is Urease subunit beta of Paraburkholderia phymatum (strain DSM 17167 / CIP 108236 / LMG 21445 / STM815) (Burkholderia phymatum).